A 927-amino-acid chain; its full sequence is E3 ubiquitin-protein ligase HOS1 (927 aa).

An RING-type; degenerate zinc finger spans residues 53-93; that stretch reads CRATRDLASCGRFVNYVLNPCGHASLCTECCQRCDVCPICR. Disordered regions lie at residues 678–699, 782–806, and 832–927; these read SGQF…LPDA, FKDL…SPEV, and VKSS…FAAR. The segment covering 797–806 has biased composition (basic and acidic residues); the sequence is KRTEESSPEV. 2 stretches are compositionally biased toward polar residues: residues 832–851 and 878–892; these read VKSS…STFF and NNNN…NNSG. A compositionally biased stretch (basic residues) spans 917-927; the sequence is KGRRRRRFAAR.

In terms of assembly, interacts with SCRM/ICE1, FLK and MSI4/FVE. Ubiquitously expressed with higher levels in leaf vasculature, roots and root tips.

Its subcellular location is the nucleus. It localises to the cytoplasm. The catalysed reaction is S-ubiquitinyl-[E2 ubiquitin-conjugating enzyme]-L-cysteine + [acceptor protein]-L-lysine = [E2 ubiquitin-conjugating enzyme]-L-cysteine + N(6)-ubiquitinyl-[acceptor protein]-L-lysine.. It functions in the pathway protein modification; protein ubiquitination. Functionally, E3 ubiquitin-protein ligase that mediates ubiquitination and subsequent proteasomal degradation of the transcription factor ICE1. Acts as a negative regulator of cold signaling pathways. Probably involved in recruiting the NUP107-160 subcomplex of the nuclear pore complex to chromatin. Controls flowering time in response to ambient temperatures (16 and 23 degrees Celsius) and intermittent cold, probably via the regulation of FT and TSF levels. This is E3 ubiquitin-protein ligase HOS1 (HOS1) from Arabidopsis thaliana (Mouse-ear cress).